The following is a 203-amino-acid chain: Peptide deformylase (203 aa).

The Fe cation site is built by C130 and H173. E174 is an active-site residue. H177 serves as a coordination point for Fe cation.

Belongs to the polypeptide deformylase family. Fe(2+) is required as a cofactor.

It carries out the reaction N-terminal N-formyl-L-methionyl-[peptide] + H2O = N-terminal L-methionyl-[peptide] + formate. Its function is as follows. Removes the formyl group from the N-terminal Met of newly synthesized proteins. Requires at least a dipeptide for an efficient rate of reaction. N-terminal L-methionine is a prerequisite for activity but the enzyme has broad specificity at other positions. This Streptococcus pneumoniae serotype 4 (strain ATCC BAA-334 / TIGR4) protein is Peptide deformylase.